Consider the following 177-residue polypeptide: Ubiquitin-conjugating enzyme E2 C (177 aa).

The tract at residues 1 to 31 is disordered; sequence MSGQNIDPAANQVRQKERPRDMTTSKERHSV. The span at 14-30 shows a compositional bias: basic and acidic residues; it reads RQKERPRDMTTSKERHS. The 146-residue stretch at 30–175 folds into the UBC core domain; the sequence is SVSKRLQQEL…LHEKYKTAQS (146 aa). Cys114 functions as the Glycyl thioester intermediate in the catalytic mechanism.

The protein belongs to the ubiquitin-conjugating enzyme family. In terms of assembly, component of the APC/C complex. In terms of processing, autoubiquitinated by the APC/C complex, leading to its degradation by the proteasome.

The enzyme catalyses S-ubiquitinyl-[E1 ubiquitin-activating enzyme]-L-cysteine + [E2 ubiquitin-conjugating enzyme]-L-cysteine = [E1 ubiquitin-activating enzyme]-L-cysteine + S-ubiquitinyl-[E2 ubiquitin-conjugating enzyme]-L-cysteine.. It catalyses the reaction S-ubiquitinyl-[E1 ubiquitin-activating enzyme]-L-cysteine + [acceptor protein]-L-lysine = [E1 ubiquitin-activating enzyme]-L-cysteine + N(6)-monoubiquitinyl-[acceptor protein]-L-lysine.. It functions in the pathway protein modification; protein ubiquitination. Catalyzes the covalent attachment of ubiquitin to other proteins. Acts as an essential factor of the anaphase promoting complex/cyclosome (APC/C), a cell cycle-regulated ubiquitin ligase that is essential for the transition from metaphase to anaphase in mitosis. Involved in both degradation of proteins responsible for maintaining sister chromatid cohesion at the onset of anaphase and of mitotic cyclins A and B at the exit of mitosis. Acts by initiating polyubiquitin chains on APC/C substrates, leading to the degradation of APC/C substrates by the proteasome and promoting mitotic exit. In Spisula solidissima (Atlantic surf-clam), this protein is Ubiquitin-conjugating enzyme E2 C (UBE2C).